The primary structure comprises 446 residues: MLTYKISPSSISGSVDVPPSKSHTLRAIFWASLSRGTSTINNPLESPDSEAMIQACKQLGAKIYKKSSSLEITGTPHLRLPKDIAIDAGSSGIVFRFFTALAAIFSEKVTITGSSQLQRRPIAPLIRALENFGATFSYQRDPYTLPFSVLGPISSGYTEVLGEDSQYASALAMACSLAEGPFSFTIINPKERPWFKLTLWWLEQLAIPYSQSEENTYSFVGKSRPEGFSYTVGGDFSSAAFLAVAALLSQSPHPTYLRNLNMQDVQGDKELFVLLKKLGANIVFENDIVIIFPSTISGGNIDMDPFIDALPILAVLCCFATSPSHLYNARGAKDKESDRIVAITEELQKMGACIQPCHDGLLINPSPLYGASMFSHNDHRIAMALSIAAMHASGDSSISDTECVKKTFPNFIQILNSLHANIQEYHEPISMWTTGSGQDLIGSCPC.

The 3-phosphoshikimate site is built by K21, S22, and R26. K21 lines the phosphoenolpyruvate pocket. 2 residues coordinate phosphoenolpyruvate: G92 and R120. Residues S165, Q166, D308, and K335 each contribute to the 3-phosphoshikimate site. Residue Q166 coordinates phosphoenolpyruvate. The active-site Proton acceptor is the D308. Phosphoenolpyruvate is bound by residues R339, R380, and K406.

Belongs to the EPSP synthase family. As to quaternary structure, monomer.

It localises to the cytoplasm. The enzyme catalyses 3-phosphoshikimate + phosphoenolpyruvate = 5-O-(1-carboxyvinyl)-3-phosphoshikimate + phosphate. Its pathway is metabolic intermediate biosynthesis; chorismate biosynthesis; chorismate from D-erythrose 4-phosphate and phosphoenolpyruvate: step 6/7. Functionally, catalyzes the transfer of the enolpyruvyl moiety of phosphoenolpyruvate (PEP) to the 5-hydroxyl of shikimate-3-phosphate (S3P) to produce enolpyruvyl shikimate-3-phosphate and inorganic phosphate. The chain is 3-phosphoshikimate 1-carboxyvinyltransferase from Chlamydia caviae (strain ATCC VR-813 / DSM 19441 / 03DC25 / GPIC) (Chlamydophila caviae).